The following is a 97-amino-acid chain: UPF0147 protein MA_0092 (97 aa).

Belongs to the UPF0147 family.

The polypeptide is UPF0147 protein MA_0092 (Methanosarcina acetivorans (strain ATCC 35395 / DSM 2834 / JCM 12185 / C2A)).